The sequence spans 369 residues: MELSEIKRNIDKYNQDLTQIRGSLDLENKETNIQEYEEMMAEPNFWDNQTKAQDIIDKNNALKAIVNGYKTLQAEVDDMDATWDLLQEEFDEEMKEDLEQEVINFKAKVDEYELQLLLDGPHDANNAILELHPGAGGTESQDWANMLFRMYQRYCEKKGFKVETVDYLPGDEAGIKSVTLLIKGHNAYGYLKAEKGVHRLVRISPFDSSGRRHTSFASCDVIPDFNNDEIEIEINPDDITVDTFRASGAGGQHINKTESAIRITHHPSGIVVNNQNERSQIKNREAAMKMLKSKLYQLKLEEQAREMAEIRGEQKEIGWGSQIRSYVFHPYSMVKDHRTNEETGKVDAVMDGDIGPFIESYLRQTMSHD.

Residue Gln252 is modified to N5-methylglutamine.

It belongs to the prokaryotic/mitochondrial release factor family. Methylated by PrmC. Methylation increases the termination efficiency of RF2.

The protein resides in the cytoplasm. Functionally, peptide chain release factor 2 directs the termination of translation in response to the peptide chain termination codons UGA and UAA. The polypeptide is Peptide chain release factor 2 (Staphylococcus aureus (strain bovine RF122 / ET3-1)).